Here is a 312-residue protein sequence, read N- to C-terminus: 4-diphosphocytidyl-2-C-methyl-D-erythritol kinase (312 aa).

Residue Lys18 is part of the active site. 104 to 114 (PIAGGMGGGSA) contacts ATP. The active site involves Asp146.

It belongs to the GHMP kinase family. IspE subfamily.

It catalyses the reaction 4-CDP-2-C-methyl-D-erythritol + ATP = 4-CDP-2-C-methyl-D-erythritol 2-phosphate + ADP + H(+). It participates in isoprenoid biosynthesis; isopentenyl diphosphate biosynthesis via DXP pathway; isopentenyl diphosphate from 1-deoxy-D-xylulose 5-phosphate: step 3/6. Catalyzes the phosphorylation of the position 2 hydroxy group of 4-diphosphocytidyl-2C-methyl-D-erythritol. This is 4-diphosphocytidyl-2-C-methyl-D-erythritol kinase from Clavibacter michiganensis subsp. michiganensis (strain NCPPB 382).